The primary structure comprises 525 residues: GMP synthase [glutamine-hydrolyzing] (525 aa).

One can recognise a Glutamine amidotransferase type-1 domain in the interval 9–207 (RILILDFGSQ…VRDICQCEAL (199 aa)). Catalysis depends on Cys-86, which acts as the Nucleophile. Active-site residues include His-181 and Glu-183. In terms of domain architecture, GMPS ATP-PPase spans 208–400 (WTPAKIIDDA…LGLPYDMLYR (193 aa)). 235–241 (SGGVDSS) contributes to the ATP binding site.

In terms of assembly, homodimer.

The catalysed reaction is XMP + L-glutamine + ATP + H2O = GMP + L-glutamate + AMP + diphosphate + 2 H(+). The protein operates within purine metabolism; GMP biosynthesis; GMP from XMP (L-Gln route): step 1/1. Functionally, catalyzes the synthesis of GMP from XMP. This chain is GMP synthase [glutamine-hydrolyzing], found in Shigella flexneri serotype 5b (strain 8401).